An 807-amino-acid polypeptide reads, in one-letter code: Maternal DNA replication licensing factor mcm3 (807 aa).

Residues 295–502 (IFEHLSKSLA…NDQEIADHVL (208 aa)) form the MCM domain. An ATP-binding site is contributed by 345 to 352 (GDPSVAKS). An Arginine finger motif is present at residues 477 to 480 (SRFD). Residues 664 to 673 (KTDKDLHDEN) show a composition bias toward basic and acidic residues. The disordered stretch occupies residues 664–741 (KTDKDLHDEN…QDGKRSLSQN (78 aa)). Residues 707-723 (FSEQDSSLNENLSQSLR) are compositionally biased toward polar residues. Residues 727-741 (KKAESQDGKRSLSQN) show a composition bias toward basic and acidic residues.

Belongs to the MCM family. As to quaternary structure, component of the mcm2-7 complex (RLF-M). The complex forms a toroidal hexameric ring with the proposed subunit order mcm2-mcm6-mcm4-mcm7-mcm3-mcm5. The heterodimer of mmcm3/mcm5 interacts with mcm4, mmcm6, mcm7 and weakly with mcm2. Interacts with mcm7, though this interaction may not be direct, and remains in a complex with mcm7 throughout the cell cycle. Component of the CMG helicase complex, composed of the mcm2-7 complex, the GINS complex and cdc45.

The protein resides in the nucleus. It localises to the chromosome. It catalyses the reaction ATP + H2O = ADP + phosphate + H(+). Functionally, acts as a component of the mcm2-7 complex (mcm complex) which is the putative replicative helicase essential for 'once per cell cycle' DNA replication initiation and elongation in eukaryotic cells. The active ATPase sites in the mcm2-7 ring are formed through the interaction surfaces of two neighboring subunits such that a critical structure of a conserved arginine finger motif is provided in trans relative to the ATP-binding site of the Walker A box of the adjacent subunit. The six ATPase active sites, however, are likely to contribute differentially to the complex helicase activity. The existence of maternal and zygotic forms of mcm3 and mcm6 suggests that specific forms of mcm2-7 complexes may be used during different stages of development. The chain is Maternal DNA replication licensing factor mcm3 (mmcm3) from Xenopus laevis (African clawed frog).